A 162-amino-acid chain; its full sequence is Regulator of sigma D (162 aa).

This sequence belongs to the Rsd/AlgQ family. Interacts with RpoD.

It is found in the cytoplasm. Binds RpoD and negatively regulates RpoD-mediated transcription activation by preventing the interaction between the primary sigma factor RpoD with the catalytic core of the RNA polymerase and with promoter DNA. May be involved in replacement of the RNA polymerase sigma subunit from RpoD to RpoS during the transition from exponential growth to the stationary phase. The polypeptide is Regulator of sigma D (Salmonella agona (strain SL483)).